Reading from the N-terminus, the 507-residue chain is Cytochrome P450 71D2 (507 aa).

The next 2 membrane-spanning stretches (helical) occupy residues 6-26 and 447-467; these read LPFN…LIYG and ICPG…LLLY. Cys448 is a heme binding site.

This sequence belongs to the cytochrome P450 family.

Its subcellular location is the membrane. This chain is Cytochrome P450 71D2, found in Catharanthus roseus (Madagascar periwinkle).